Reading from the N-terminus, the 290-residue chain is Transcription factor HES-1 (290 aa).

Residues 1–47 (MPADTGMEKPTASPIAGAPASASHTPDKPRSASEHRKSSKPIMEKRR) form a disordered region. Positions 10–23 (PTASPIAGAPASAS) are enriched in low complexity. The segment covering 25-36 (TPDKPRSASEHR) has biased composition (basic and acidic residues). One can recognise a bHLH domain in the interval 35–92 (HRKSSKPIMEKRRRARINESLGQLKMLILDALKKDSSRHSKLEKADILEMTVKHLRNL). Positions 111-144 (YRAGFNECMNEVTRFLSTCEGVNADVRARLLGHL) constitute an Orange domain. A WRPW motif motif is present at residues 287–290 (WRPW).

Transcription repression requires formation of a complex with a corepressor protein of the Groucho/TLE family.

The protein localises to the nucleus. Its function is as follows. Transcriptional repressor of genes that require a bHLH protein for their transcription. May act as a negative regulator of myogenesis by inhibiting the functions of MYOD1 and ASH1. This Gallus gallus (Chicken) protein is Transcription factor HES-1 (HES1).